The following is a 217-amino-acid chain: Somatotropin (217 aa).

A signal peptide spans 1–26 (MAPGSWFSPLFIAVITLGLQWPKEAA). His-46 is a Zn(2+) binding site. Cys-79 and Cys-190 are disulfide-bonded. Position 199 (Glu-199) interacts with Zn(2+). The cysteines at positions 207 and 215 are disulfide-linked.

It belongs to the somatotropin/prolactin family.

Its subcellular location is the secreted. Its function is as follows. Growth hormone plays an important role in growth control. The sequence is that of Somatotropin (GH) from Struthio camelus (Common ostrich).